The sequence spans 292 residues: Inositol oxygenase (292 aa).

Substrate is bound by residues Arg33 and 88–90 (DES). Fe cation-binding residues include His101, His128, and Asp129. Residues Lys132 and 149–150 (GD) each bind substrate. His201, His227, and Asp260 together coordinate Fe cation. Substrate is bound at residue 227–228 (HS).

It belongs to the myo-inositol oxygenase family. Fe cation serves as cofactor.

The protein localises to the cytoplasm. It carries out the reaction myo-inositol + O2 = D-glucuronate + H2O + H(+). It participates in polyol metabolism; myo-inositol degradation into D-glucuronate; D-glucuronate from myo-inositol: step 1/1. The polypeptide is Inositol oxygenase (miox) (Dictyostelium discoideum (Social amoeba)).